A 255-amino-acid polypeptide reads, in one-letter code: 5'-nucleotidase SurE (255 aa).

Asp8, Asp9, Ser39, and Asn91 together coordinate a divalent metal cation.

Belongs to the SurE nucleotidase family. It depends on a divalent metal cation as a cofactor.

It is found in the cytoplasm. The enzyme catalyses a ribonucleoside 5'-phosphate + H2O = a ribonucleoside + phosphate. Functionally, nucleotidase that shows phosphatase activity on nucleoside 5'-monophosphates. The sequence is that of 5'-nucleotidase SurE from Acinetobacter baumannii (strain AB0057).